The chain runs to 145 residues: Small ribosomal subunit protein eS19 (145 aa).

The residue at position 23 (K23) is an N6-acetyllysine. Position 67 is an omega-N-methylarginine (R67). N6-acetyllysine is present on residues K111 and K115. K143 carries the post-translational modification N6-succinyllysine.

Belongs to the eukaryotic ribosomal protein eS19 family. As to quaternary structure, component of the small ribosomal subunit. Part of the small subunit (SSU) processome, composed of more than 70 proteins and the RNA chaperone small nucleolar RNA (snoRNA) U3. Interacts with RPS19BP1; the interaction is direct and mediates the integration of RPS19 in state post-A1. Interacts with RPS19BP1.

The protein resides in the cytoplasm. The protein localises to the nucleus. Its subcellular location is the nucleolus. In terms of biological role, component of the small ribosomal subunit. The ribosome is a large ribonucleoprotein complex responsible for the synthesis of proteins in the cell. Required for pre-rRNA processing and maturation of 40S ribosomal subunits. Part of the small subunit (SSU) processome, first precursor of the small eukaryotic ribosomal subunit. During the assembly of the SSU processome in the nucleolus, many ribosome biogenesis factors, an RNA chaperone and ribosomal proteins associate with the nascent pre-rRNA and work in concert to generate RNA folding, modifications, rearrangements and cleavage as well as targeted degradation of pre-ribosomal RNA by the RNA exosome. The protein is Small ribosomal subunit protein eS19 (RPS19) of Pongo abelii (Sumatran orangutan).